Reading from the N-terminus, the 355-residue chain is Aminopeptidase N (355 aa).

Substrate-binding positions include Glu156 and 290 to 294 (GAMEN). Position 326 (His326) interacts with Zn(2+). The active-site Proton acceptor is Glu327. Zn(2+) contacts are provided by His330 and Glu349. Glu349 lines the substrate pocket.

This sequence belongs to the peptidase M1 family. Requires Zn(2+) as cofactor.

It is found in the cytoplasm. The catalysed reaction is Release of an N-terminal amino acid, Xaa-|-Yaa- from a peptide, amide or arylamide. Xaa is preferably Ala, but may be most amino acids including Pro (slow action). When a terminal hydrophobic residue is followed by a prolyl residue, the two may be released as an intact Xaa-Pro dipeptide.. Aminopeptidase N is involved in the degradation of intracellular peptides generated by protein breakdown during normal growth as well as in response to nutrient starvation. In Acetobacter pasteurianus (Acetobacter turbidans), this protein is Aminopeptidase N (pepN).